A 25-amino-acid polypeptide reads, in one-letter code: Zinc metalloproteinase-disintegrin-like daborhagin-M (25 aa).

The region spanning 14-25 is the Peptidase M12B domain; that stretch reads SYVELIITVDHS. Residue glutamate 17 participates in Ca(2+) binding.

It belongs to the venom metalloproteinase (M12B) family. P-III subfamily. P-IIIa sub-subfamily. Monomer. Requires Zn(2+) as cofactor. Post-translationally, N-glycosylated. In terms of processing, contains 16 disulfide bonds. In terms of tissue distribution, expressed by the venom gland.

The protein resides in the secreted. Inhibited by EDTA, EGTA and 1,10-phenanthroline. Addition of Mg(2+) or Ca(2+) increases the casein hydrolysis rate. Functionally, snake venom zinc metalloprotease that possesses high hemorrhagic activity (minimum hemorrhagic dose, MHD=0.86 ug) when subcutaneously injected into mice. Has potent fibrinogenolytic activity on alpha-chain of fibrinogen (FGA). Hydrolyzes model substrate (beta-chain of insulin) at Ala(14)-Leu(15) and Tyr(16)-Leu(17) followed by His(10)-Leu(11) and Phe(24)-Phe(25). The protein is Zinc metalloproteinase-disintegrin-like daborhagin-M of Daboia siamensis (Eastern Russel's viper).